Reading from the N-terminus, the 315-residue chain is Homoserine kinase (315 aa).

91–101 provides a ligand contact to ATP; sequence PIGSGLGSSAS.

Belongs to the GHMP kinase family. Homoserine kinase subfamily.

The protein resides in the cytoplasm. The catalysed reaction is L-homoserine + ATP = O-phospho-L-homoserine + ADP + H(+). The protein operates within amino-acid biosynthesis; L-threonine biosynthesis; L-threonine from L-aspartate: step 4/5. Functionally, catalyzes the ATP-dependent phosphorylation of L-homoserine to L-homoserine phosphate. This Buchnera aphidicola subsp. Cinara cedri (strain Cc) protein is Homoserine kinase.